Reading from the N-terminus, the 1020-residue chain is X-linked retinitis pigmentosa GTPase regulator (1020 aa).

RCC1 repeat units lie at residues 54 to 105, 106 to 158, 159 to 208, 209 to 261, 262 to 313, and 314 to 367; these read NKLY…STEG, GNVY…LTED, GRLF…VTTD, GELY…LTEN, AVYT…ITDI, and GLMY…FAAP. Phosphoserine occurs at positions 418 and 518. Disordered stretches follow at residues 609-776, 790-906, and 989-1020; these read HENN…IISK, EIPE…KEKA, and DNKDADQNHMSQNHQNIPPTNTERRSKSCTIL. Basic and acidic residues-rich tracts occupy residues 618 to 636, 644 to 665, 685 to 698, 704 to 715, 760 to 771, 790 to 802, 816 to 853, and 883 to 906; these read LDAKEIEKESDGGHSQKES, EKETKLAEIAGMKDLREREKST, EENKDFVKKRESCK, DSERESVEKPDS, KLIEQGNEKETK, EIPEEKEGAEDSK, ENVKVHGGRKEKTEILSDDLTDKAEDHEFSKTEELKLE, and SKTEGAERTNDDSSAETIEKKEKA. Residues 996–1009 are compositionally biased toward polar residues; that stretch reads NHMSQNHQNIPPTN. Cys1017 is subject to Cysteine methyl ester. A lipid anchor (S-geranylgeranyl cysteine) is attached at Cys1017. Residues 1018-1020 constitute a propeptide, removed in mature form; sequence TIL.

In terms of assembly, interacts with SPATA7. Interacts with CEP290. Interacts with WHRN. Interacts with PDE6D. Interacts with RPGRIP1. Interacts with RPGRIP1L. PDE6D, RPGRIP1 and RPGRIP1L may compete for the same binding sites. Interacts with RAB37 and RAB8A (in GDP-bound forms); functions as GEF for RAB37 and RAB8A. As to quaternary structure, isoform 6 interacts with NPM1 (via C-terminus). Isoform 6 interacts with SMC1A and SMC3. Prenylated. In terms of tissue distribution, heart, brain, placenta, lung, liver, muscle, kidney, retina, pancreas and fetal retinal pigment epithelium. Isoform 3 is found only in the retina. Colocalizes with RPGRIP1 in the outer segment of rod photoreceptors and cone outer segments.

It is found in the cytoplasm. The protein localises to the cytoskeleton. It localises to the flagellum axoneme. Its subcellular location is the golgi apparatus. The protein resides in the cell projection. It is found in the cilium. The protein localises to the microtubule organizing center. It localises to the centrosome. Its subcellular location is the cilium basal body. The protein resides in the cilium axoneme. In terms of biological role, acts as a guanine-nucleotide releasing factor (GEF) for RAB8A and RAB37 by promoting the conversion of inactive RAB-GDP to the active form RAB-GTP. GEF activity towards RAB8A may facilitate ciliary trafficking by modulating ciliary intracellular localization of RAB8A. GEF activity towards RAB37 maintains autophagic homeostasis and retinal function. Involved in photoreceptor integrity. May control cilia formation by regulating actin stress filaments and cell contractility. May be involved in microtubule organization and regulation of transport in primary cilia. May play a critical role in spermatogenesis and in intraflagellar transport processes. This is X-linked retinitis pigmentosa GTPase regulator from Homo sapiens (Human).